A 95-amino-acid chain; its full sequence is MNTLPGTLNLLLGSIANFSEIYLILILLKLSLAWFPTVNWYNEPFCSLNRITDPYLKLFRGSIPPMFGMDMSPMLGIIFLQCLMVIFNNVRLESA.

The protein belongs to the ycf19 family.

It is found in the plastid. It localises to the chloroplast. This is an uncharacterized protein from Porphyra purpurea (Red seaweed).